Here is a 300-residue protein sequence, read N- to C-terminus: uncharacterized protein (300 aa).

Residues 230 to 251 (LRQSTSRQSISRQSISRQSTSR) form a disordered region. The segment covering 231–251 (RQSTSRQSISRQSISRQSTSR) has biased composition (low complexity).

This is an uncharacterized protein from Acanthamoeba polyphaga (Amoeba).